Consider the following 115-residue polypeptide: Large ribosomal subunit protein bL19 (115 aa).

The protein belongs to the bacterial ribosomal protein bL19 family.

Its function is as follows. This protein is located at the 30S-50S ribosomal subunit interface and may play a role in the structure and function of the aminoacyl-tRNA binding site. The chain is Large ribosomal subunit protein bL19 from Caldanaerobacter subterraneus subsp. tengcongensis (strain DSM 15242 / JCM 11007 / NBRC 100824 / MB4) (Thermoanaerobacter tengcongensis).